The sequence spans 240 residues: Lipoprotein-releasing system ATP-binding protein LolD (240 aa).

One can recognise an ABC transporter domain in the interval 15–240 (IRAESLGKTY…GLRELTSAEV (226 aa)). 51-58 (GASGAGKS) provides a ligand contact to ATP.

It belongs to the ABC transporter superfamily. Lipoprotein translocase (TC 3.A.1.125) family. The complex is composed of two ATP-binding proteins (LolD) and two transmembrane proteins (LolC and LolE).

It localises to the cell inner membrane. Its function is as follows. Part of the ABC transporter complex LolCDE involved in the translocation of mature outer membrane-directed lipoproteins, from the inner membrane to the periplasmic chaperone, LolA. Responsible for the formation of the LolA-lipoprotein complex in an ATP-dependent manner. The sequence is that of Lipoprotein-releasing system ATP-binding protein LolD from Xylella fastidiosa (strain Temecula1 / ATCC 700964).